We begin with the raw amino-acid sequence, 182 residues long: Neuropeptide CCHamide-1 (182 aa).

The N-terminal stretch at 1 to 22 is a signal peptide; it reads MWYSKCSWTLVVLVALFALVTG. The cysteines at positions 24 and 31 are disulfide-linked. At H35 the chain carries Histidine amide. The propeptide occupies 39–182; that stretch reads SGGKAVIDAK…ENYSGYELTK (144 aa). Disordered regions lie at residues 67 to 103 and 133 to 154; these read NNNN…AAPA and QLQD…DAAA. Residues 87–103 show a composition bias toward low complexity; sequence RNTNANSANNIPLAAPA. N174 carries an N-linked (GlcNAc...) asparagine glycan.

In terms of tissue distribution, expressed in endocrine cells of the larval midgut (at protein level). In the brain, expressed in the optic lobes, lateral protocerebrum, subesophageal ganglion, and intermediate and superior medial protocerebrum (at protein level). Expressed in DN1a neurons but not in other clock neurons and expression follows a rhythmic pattern controlled by the circadian clock (at protein level). In the posterior midgut, expressed in enteroendocrine cells (at protein level). Low levels in larval brain with higher levels in larval and adult gut and adult brain.

It localises to the secreted. Its function is as follows. Neuropeptide ligand for the CCHamide-1 receptor CCHa1-R. Neuromessenger mediating signaling between neuronal cells of the circadian clock network involved in regulation of sleep latency (the time required to fall asleep), amount of sleep and depth of sleep (arousability). Together with PDF, involved in regulating intensity and periodicity of daytime activity. In subsets of clock neurons modulates the rhythmic expression of PDP1 and PDF, and together with PDF modulates the rhythmic expression of circadian protein PER/period, but not TIM/timeless. Mediates signaling from DN1a (anterior dorsal neurons 1) clock neurons to s-LNv (small ventral lateral neurons) clock neurons through CCHa1-R, contributing to regulation of activity rhythms by the circadian clock, particularly in the morning. May be involved in signaling between clock neurons and non-clock neurons, such as the fan-shaped body, involved in sleep homeostasis. In response to a high protein diet mediates hormonal signaling between the gut and a CCHa1-R expressing subset of dopaminergic cells in the protocerebral anterior medial (PAM) cluster of the brain. This suppresses arousability by mechano-sensory stimulation (but not thermal stimulation) but is not involved in regulation of sleep patterns. The protein is Neuropeptide CCHamide-1 of Drosophila melanogaster (Fruit fly).